The primary structure comprises 208 residues: Ypt/Rab-type GTPase ypt71 (208 aa).

GTP contacts are provided by residues 17–23 (SGVGKTC), 33–40 (FSREYKAT), G66, 124–127 (NQID), and 158–160 (SAK). The Effector region signature appears at 37–45 (YKATIGADF). 2 S-geranylgeranyl cysteine lipidation sites follow: C206 and C208. C208 bears the Cysteine methyl ester mark.

This sequence belongs to the small GTPase superfamily. Rab family.

It localises to the vacuole membrane. Its activity is regulated as follows. Rab activation is generally mediated by a guanine exchange factor (GEF), while inactivation through hydrolysis of bound GTP is catalyzed by a GTPase activating protein (GAP). In terms of biological role, ypt/Rab-type GTPases are key regulators of membrane trafficking and intracellular vesicular transport. They act as molecular switches that convert between GTP-bound and GDP-bound states, and regulate virtually all steps of membrane traffic from the formation of the transport vesicle at the donor membrane to its fusion at the target membrane. In the GDP-bound state, Ypt proteins are predominantly cytosolic, solubilized through the interaction with a GDP dissociation inhibitor (GDI). In the GTP-bound state, the proteins are membrane bound and interact with specific effector proteins that select cargo, promote vesicle movement, or verify the correct site of fusion. Act antagonistically to ypt7 in regulating vacuolar morphology, promoting vacuolar fission. The chain is Ypt/Rab-type GTPase ypt71 (ypt71) from Schizosaccharomyces pombe (strain 972 / ATCC 24843) (Fission yeast).